The chain runs to 1176 residues: Leucine--tRNA ligase, cytoplasmic (1176 aa).

Tyrosine 52 and tyrosine 54 together coordinate L-leucine. The 'HIGH' region motif lies at histidine 60–histidine 63. The disordered stretch occupies residues proline 115–glycine 142. Residues phenylalanine 117–glutamate 126 are compositionally biased toward acidic residues. The span at threonine 127–lysine 139 shows a compositional bias: basic and acidic residues. Serine 167 carries the phosphoserine modification. An editing domain region spans residues glycine 260–glutamate 509. The L-leucine site is built by leucine 594 and serine 597. Residues lysine 716–serine 720 carry the 'KMSKS' region motif. An ATP-binding site is contributed by lysine 719. Phosphoserine is present on serine 720. Residues lysine 970 and lysine 1047 each carry the N6-acetyllysine modification.

This sequence belongs to the class-I aminoacyl-tRNA synthetase family.

It localises to the cytoplasm. The enzyme catalyses tRNA(Leu) + L-leucine + ATP = L-leucyl-tRNA(Leu) + AMP + diphosphate. It catalyses the reaction L-methionyl-tRNA(Leu) + H2O = tRNA(Leu) + L-methionine + H(+). With respect to regulation, 5-fluoro-1,3-dihydro-1-hydroxy-1,2-benzoxaborole inhibits LARS1 by forming a covalent adduct with the 3' adenosine of tRNA(Leu) at the editing site, thus locking the enzyme in an inactive conformation. Aminoacyl-tRNA synthetase that catalyzes the specific attachment of leucine to its cognate tRNA (tRNA(Leu)). It performs tRNA aminoacylation in a two-step reaction: Leu is initially activated by ATP to form a leucyl-adenylate (Leu-AMP) intermediate; then the leucyl moiety is transferred to the acceptor 3' end of the tRNA to yield leucyl-tRNA. To improve the fidelity of catalytic reactions, it is also able to hydrolyze misactivated aminoacyl-adenylate intermediates (pre-transfer editing) and mischarged aminoacyl-tRNAs (post-transfer editing). In Pongo abelii (Sumatran orangutan), this protein is Leucine--tRNA ligase, cytoplasmic (LARS1).